A 246-amino-acid polypeptide reads, in one-letter code: Phycobilisome rod-core linker polypeptide CpcG2 (246 aa).

Residues 11–189 form the PBS-linker domain; sequence SSQNQRVAGY…YWRDKLENSR (179 aa). Residues 224 to 246 form a disordered region; it reads DTTRRDRPTVPASINPTASFPLR. The segment covering 235-246 has biased composition (polar residues); that stretch reads ASINPTASFPLR.

This sequence belongs to the phycobilisome linker protein family. The phycobilisome is a hemidiscoidal structure that is composed of two distinct substructures: a core complex and a number of rods radiating from the core.

The protein resides in the cellular thylakoid membrane. Functionally, rod-core linker protein required for attachment of phycocyanin to allophycocyanin in cores of phycobilisomes. In terms of biological role, linker polypeptides determine the state of aggregation and the location of the disk-shaped phycobiliprotein units within the phycobilisome and modulate their spectroscopic properties in order to mediate a directed and optimal energy transfer. The polypeptide is Phycobilisome rod-core linker polypeptide CpcG2 (cpcG2) (Thermosynechococcus vestitus (strain NIES-2133 / IAM M-273 / BP-1)).